The chain runs to 125 residues: Glycine cleavage system H protein (125 aa).

Positions V22–K104 constitute a Lipoyl-binding domain. At K63 the chain carries N6-lipoyllysine.

It belongs to the GcvH family. The glycine cleavage system is composed of four proteins: P, T, L and H. (R)-lipoate serves as cofactor.

Functionally, the glycine cleavage system catalyzes the degradation of glycine. The H protein shuttles the methylamine group of glycine from the P protein to the T protein. The chain is Glycine cleavage system H protein from Brucella abortus (strain 2308).